A 160-amino-acid polypeptide reads, in one-letter code: Putative pre-16S rRNA nuclease (160 aa).

This sequence belongs to the YqgF nuclease family.

The protein localises to the cytoplasm. Could be a nuclease involved in processing of the 5'-end of pre-16S rRNA. The polypeptide is Putative pre-16S rRNA nuclease (Cereibacter sphaeroides (strain ATCC 17029 / ATH 2.4.9) (Rhodobacter sphaeroides)).